The chain runs to 193 residues: Large ribosomal subunit protein eL19B (193 aa).

The interval 157–179 (EQQDARRARAKAARQRRAKAVEE) is disordered. Residues 164 to 174 (ARAKAARQRRA) show a composition bias toward basic residues.

This sequence belongs to the eukaryotic ribosomal protein eL19 family. As to quaternary structure, component of the large ribosomal subunit (LSU). Mature yeast ribosomes consist of a small (40S) and a large (60S) subunit. The 40S small subunit contains 1 molecule of ribosomal RNA (18S rRNA) and at least 33 different proteins. The large 60S subunit contains 3 rRNA molecules (25S, 5.8S and 5S rRNA) and at least 46 different proteins. eL19 lies in close proximity to the binding site for eukaryotic initiation factor eIF4G.

It localises to the cytoplasm. Functionally, component of the ribosome, a large ribonucleoprotein complex responsible for the synthesis of proteins in the cell. The small ribosomal subunit (SSU) binds messenger RNAs (mRNAs) and translates the encoded message by selecting cognate aminoacyl-transfer RNA (tRNA) molecules. The large subunit (LSU) contains the ribosomal catalytic site termed the peptidyl transferase center (PTC), which catalyzes the formation of peptide bonds, thereby polymerizing the amino acids delivered by tRNAs into a polypeptide chain. The nascent polypeptides leave the ribosome through a tunnel in the LSU and interact with protein factors that function in enzymatic processing, targeting, and the membrane insertion of nascent chains at the exit of the ribosomal tunnel. eL19 may play a role in the last stages of translation initiation, in particular subunit joining and shedding/releasing factors. The polypeptide is Large ribosomal subunit protein eL19B (rpl1902) (Schizosaccharomyces pombe (strain 972 / ATCC 24843) (Fission yeast)).